Consider the following 302-residue polypeptide: Tyrosine recombinase XerC (302 aa).

In terms of domain architecture, Core-binding (CB) spans 2 to 89 (QPLMEQIRAF…AIRSFYRHLL (88 aa)). The Tyr recombinase domain maps to 110 to 289 (RLPFHLDIDQ…SLDRLMEVYD (180 aa)). Active-site residues include Arg150, Lys174, His241, Arg244, and His267. Residue Tyr276 is the O-(3'-phospho-DNA)-tyrosine intermediate of the active site.

This sequence belongs to the 'phage' integrase family. XerC subfamily. Forms a cyclic heterotetrameric complex composed of two molecules of XerC and two molecules of XerD.

It localises to the cytoplasm. In terms of biological role, site-specific tyrosine recombinase, which acts by catalyzing the cutting and rejoining of the recombining DNA molecules. The XerC-XerD complex is essential to convert dimers of the bacterial chromosome into monomers to permit their segregation at cell division. It also contributes to the segregational stability of plasmids. This Pelobacter propionicus (strain DSM 2379 / NBRC 103807 / OttBd1) protein is Tyrosine recombinase XerC.